Reading from the N-terminus, the 404-residue chain is Zinc metalloprotease Rip1 (404 aa).

The chain crosses the membrane as a helical span at residues Met-1–His-21. Zn(2+) is bound at residue His-21. Glu-22 is an active-site residue. His-25 contacts Zn(2+). A helical transmembrane segment spans residues Pro-104–Leu-124. The 83-residue stretch at Val-121 to Gly-203 folds into the PDZ domain. Residue Asp-202 participates in Zn(2+) binding. 2 helical membrane-spanning segments follow: residues Leu-313–Leu-333 and Leu-373–Thr-393.

The protein belongs to the peptidase M50B family. Zn(2+) serves as cofactor.

It localises to the cell membrane. Functionally, a probable site-2 protease (S2P) that cleaves type-2 transmembrane proteins within their membrane-spanning domains. Degrades anti-sigma factors RskA, RslA and RsmA, releasing sigma factors SigK, SigL and SigM from the cellular membrane, activating signaling pathways. Does not act on RsdA. Regulates the composition of extractable mycolic acids in the cell envelope in response to changes in membrane fluidity. Mediates transcriptional regulation of mycolic acid biosynthetic genes in response to detergent. Probably also cleaves PbpB (PBP3, FtsI); this cleavage is inhibited by Wag31-PbpBI interaction. Regulated intramembrane proteolysis (RIP) occurs when an extracytoplasmic signal (possibly oxidative stress) triggers a concerted proteolytic cascade to transmit information and elicit cellular responses. The membrane-spanning regulatory substrate protein (includes anti-sigma factors RskA, RslA, RsmA, and PbpB) is first cut extracytoplasmically (site-1 protease, S1P), then within the membrane itself (site-2 protease, S2P, this entry), while cytoplasmic proteases finish degrading the regulatory protein, liberating the effector protein (ECF sigma factors SigK, SigL and SigM). The sequence is that of Zinc metalloprotease Rip1 (rip1) from Mycobacterium tuberculosis (strain ATCC 35801 / TMC 107 / Erdman).